A 730-amino-acid chain; its full sequence is Phosphoribosylformylglycinamidine synthase subunit PurL (730 aa).

H44 is an active-site residue. 2 residues coordinate ATP: Y47 and K86. E88 is a binding site for Mg(2+). Substrate is bound by residues 89–92 (SHNH) and R111. H90 acts as the Proton acceptor in catalysis. D112 serves as a coordination point for Mg(2+). A substrate-binding site is contributed by Q235. D263 contributes to the Mg(2+) binding site. Position 307 to 309 (307 to 309 (ESQ)) interacts with substrate. Residues N489 and G526 each contribute to the ATP site. Mg(2+) is bound at residue N527. Residue S529 participates in substrate binding.

Belongs to the FGAMS family. Monomer. Part of the FGAM synthase complex composed of 1 PurL, 1 PurQ and 2 PurS subunits.

Its subcellular location is the cytoplasm. The catalysed reaction is N(2)-formyl-N(1)-(5-phospho-beta-D-ribosyl)glycinamide + L-glutamine + ATP + H2O = 2-formamido-N(1)-(5-O-phospho-beta-D-ribosyl)acetamidine + L-glutamate + ADP + phosphate + H(+). It participates in purine metabolism; IMP biosynthesis via de novo pathway; 5-amino-1-(5-phospho-D-ribosyl)imidazole from N(2)-formyl-N(1)-(5-phospho-D-ribosyl)glycinamide: step 1/2. Functionally, part of the phosphoribosylformylglycinamidine synthase complex involved in the purines biosynthetic pathway. Catalyzes the ATP-dependent conversion of formylglycinamide ribonucleotide (FGAR) and glutamine to yield formylglycinamidine ribonucleotide (FGAM) and glutamate. The FGAM synthase complex is composed of three subunits. PurQ produces an ammonia molecule by converting glutamine to glutamate. PurL transfers the ammonia molecule to FGAR to form FGAM in an ATP-dependent manner. PurS interacts with PurQ and PurL and is thought to assist in the transfer of the ammonia molecule from PurQ to PurL. The chain is Phosphoribosylformylglycinamidine synthase subunit PurL from Pelagibacter ubique (strain HTCC1062).